The primary structure comprises 263 residues: Purine nucleoside phosphorylase SAR1163 (263 aa).

Residues His-79, Cys-124, and His-141 each coordinate Zn(2+).

Belongs to the purine nucleoside phosphorylase YfiH/LACC1 family. In terms of assembly, homodimer. The cofactor is Cu(2+). It depends on Zn(2+) as a cofactor.

The enzyme catalyses adenosine + phosphate = alpha-D-ribose 1-phosphate + adenine. It catalyses the reaction S-methyl-5'-thioadenosine + phosphate = 5-(methylsulfanyl)-alpha-D-ribose 1-phosphate + adenine. The catalysed reaction is inosine + phosphate = alpha-D-ribose 1-phosphate + hypoxanthine. It carries out the reaction adenosine + H2O + H(+) = inosine + NH4(+). Its function is as follows. Purine nucleoside enzyme that catalyzes the phosphorolysis of adenosine and inosine nucleosides, yielding D-ribose 1-phosphate and the respective free bases, adenine and hypoxanthine. Also catalyzes the phosphorolysis of S-methyl-5'-thioadenosine into adenine and S-methyl-5-thio-alpha-D-ribose 1-phosphate. Also has adenosine deaminase activity. The protein is Purine nucleoside phosphorylase SAR1163 of Staphylococcus aureus (strain MRSA252).